The primary structure comprises 773 residues: Phenylalanine--tRNA ligase beta subunit (773 aa).

Positions 39–150 constitute a tRNA-binding domain; that stretch reads LKAPDKVVVG…GKLELGRPLN (112 aa). The region spanning 391 to 467 is the B5 domain; it reads KELPIIPISI…RIIGIDNIAS (77 aa). Mg(2+)-binding residues include aspartate 445, aspartate 451, glutamate 454, and glutamate 455. Residues 682–773 enclose the FDX-ACB domain; that stretch reads SKFPAITRDL…TLKNLGLDLR (92 aa).

This sequence belongs to the phenylalanyl-tRNA synthetase beta subunit family. Type 1 subfamily. In terms of assembly, tetramer of two alpha and two beta subunits. Mg(2+) is required as a cofactor.

The protein resides in the cytoplasm. It carries out the reaction tRNA(Phe) + L-phenylalanine + ATP = L-phenylalanyl-tRNA(Phe) + AMP + diphosphate + H(+). This is Phenylalanine--tRNA ligase beta subunit from Campylobacter jejuni (strain RM1221).